The following is a 121-amino-acid chain: Ribosome-binding factor A (121 aa).

It belongs to the RbfA family. As to quaternary structure, monomer. Binds 30S ribosomal subunits, but not 50S ribosomal subunits or 70S ribosomes.

Its subcellular location is the cytoplasm. In terms of biological role, one of several proteins that assist in the late maturation steps of the functional core of the 30S ribosomal subunit. Associates with free 30S ribosomal subunits (but not with 30S subunits that are part of 70S ribosomes or polysomes). Required for efficient processing of 16S rRNA. May interact with the 5'-terminal helix region of 16S rRNA. The sequence is that of Ribosome-binding factor A from Hydrogenovibrio crunogenus (strain DSM 25203 / XCL-2) (Thiomicrospira crunogena).